Here is a 404-residue protein sequence, read N- to C-terminus: Cysteine desulfurase IscS (404 aa).

Pyridoxal 5'-phosphate is bound by residues 75–76 (AT), Asn155, Gln183, and 203–205 (SAH). Lys206 is modified (N6-(pyridoxal phosphate)lysine). Residue Thr243 coordinates pyridoxal 5'-phosphate. The active-site Cysteine persulfide intermediate is Cys328. A [2Fe-2S] cluster-binding site is contributed by Cys328.

This sequence belongs to the class-V pyridoxal-phosphate-dependent aminotransferase family. NifS/IscS subfamily. Homodimer. Forms a heterotetramer with IscU, interacts with other sulfur acceptors. Requires pyridoxal 5'-phosphate as cofactor.

It is found in the cytoplasm. It carries out the reaction (sulfur carrier)-H + L-cysteine = (sulfur carrier)-SH + L-alanine. It functions in the pathway cofactor biosynthesis; iron-sulfur cluster biosynthesis. Functionally, master enzyme that delivers sulfur to a number of partners involved in Fe-S cluster assembly, tRNA modification or cofactor biosynthesis. Catalyzes the removal of elemental sulfur atoms from cysteine to produce alanine. Functions as a sulfur delivery protein for Fe-S cluster synthesis onto IscU, an Fe-S scaffold assembly protein, as well as other S acceptor proteins. The protein is Cysteine desulfurase IscS of Colwellia psychrerythraea (strain 34H / ATCC BAA-681) (Vibrio psychroerythus).